A 920-amino-acid polypeptide reads, in one-letter code: Phosphoenolpyruvate carboxylase (920 aa).

Catalysis depends on residues His-138 and Lys-583.

Belongs to the PEPCase type 1 family. The cofactor is Mg(2+).

It catalyses the reaction oxaloacetate + phosphate = phosphoenolpyruvate + hydrogencarbonate. Forms oxaloacetate, a four-carbon dicarboxylic acid source for the tricarboxylic acid cycle. This Streptococcus pyogenes serotype M5 (strain Manfredo) protein is Phosphoenolpyruvate carboxylase.